Consider the following 122-residue polypeptide: Large ribosomal subunit protein uL18 (122 aa).

This sequence belongs to the universal ribosomal protein uL18 family. Part of the 50S ribosomal subunit; part of the 5S rRNA/L5/L18/L25 subcomplex. Contacts the 5S and 23S rRNAs.

Its function is as follows. This is one of the proteins that bind and probably mediate the attachment of the 5S RNA into the large ribosomal subunit, where it forms part of the central protuberance. This Syntrophotalea carbinolica (strain DSM 2380 / NBRC 103641 / GraBd1) (Pelobacter carbinolicus) protein is Large ribosomal subunit protein uL18.